Consider the following 188-residue polypeptide: Pyridoxal 5'-phosphate synthase subunit PdxT (188 aa).

Residue 47-49 (GES) coordinates L-glutamine. Cys79 functions as the Nucleophile in the catalytic mechanism. L-glutamine contacts are provided by residues Arg105 and 134–135 (IR). Residues His170 and Glu172 each act as charge relay system in the active site.

It belongs to the glutaminase PdxT/SNO family. As to quaternary structure, in the presence of PdxS, forms a dodecamer of heterodimers. Only shows activity in the heterodimer.

It catalyses the reaction aldehydo-D-ribose 5-phosphate + D-glyceraldehyde 3-phosphate + L-glutamine = pyridoxal 5'-phosphate + L-glutamate + phosphate + 3 H2O + H(+). The enzyme catalyses L-glutamine + H2O = L-glutamate + NH4(+). It functions in the pathway cofactor biosynthesis; pyridoxal 5'-phosphate biosynthesis. Catalyzes the hydrolysis of glutamine to glutamate and ammonia as part of the biosynthesis of pyridoxal 5'-phosphate. The resulting ammonia molecule is channeled to the active site of PdxS. The polypeptide is Pyridoxal 5'-phosphate synthase subunit PdxT (Listeria welshimeri serovar 6b (strain ATCC 35897 / DSM 20650 / CCUG 15529 / CIP 8149 / NCTC 11857 / SLCC 5334 / V8)).